The chain runs to 315 residues: Protein TIFY 4B (315 aa).

The segment at cysteine 113–proline 145 is disordered. A Tify domain is found at threonine 151 to asparagine 186. The short motif at glutamine 233 to glycine 260 is the Jas element. A Nuclear localization signal motif is present at residues asparagine 235–arginine 242. The span at lysine 248–lysine 257 shows a compositional bias: basic residues. The tract at residues lysine 248–asparagine 315 is disordered. The span at proline 293 to asparagine 315 shows a compositional bias: polar residues.

It belongs to the TIFY/JAZ family. In terms of assembly, interacts with AFPH2/NINJA.

Its subcellular location is the nucleus. Functionally, regulates the arrest of dispersed meristematic cells during lamina development. The sequence is that of Protein TIFY 4B (TIFY4B) from Arabidopsis thaliana (Mouse-ear cress).